Here is a 215-residue protein sequence, read N- to C-terminus: Hibernation-associated plasma protein HP-27 (215 aa).

An N-terminal signal peptide occupies residues 1–30; the sequence is MYEAGKRASFMGGAGIWILALSVLMHVVCS. Residues 34-79 form a disordered region; the sequence is GNPESCNVPGPQGPPGMRGPPGTPGKPGPPGWNGFPGLPGPPGPPG. Residues 43 to 81 enclose the Collagen-like domain; it reads GPQGPPGMRGPPGTPGKPGPPGWNGFPGLPGPPGPPGMT. A compositionally biased stretch (pro residues) spans 44–63; it reads PQGPPGMRGPPGTPGKPGPP. The region spanning 85–215 is the C1q domain; that stretch reads HSKGTSAFAV…VFSGFLIHEN (131 aa). Asn155 carries N-linked (GlcNAc...) asparagine glycosylation.

As to expression, plasma; synthesized in the liver.

It localises to the secreted. In terms of biological role, plasma proteins HP-20, HP-25, HP-27 and HP-55 form a 140 kDa complex via disulfide bonds in the plasma and are hibernation specific. In Tamias sibiricus (Siberian chipmunk), this protein is Hibernation-associated plasma protein HP-27.